A 218-amino-acid chain; its full sequence is Oxygen regulatory protein NreC (218 aa).

One can recognise a Response regulatory domain in the interval 2–119; the sequence is KIVIADDHAV…QLILAVRTVY (118 aa). Aspartate 53 carries the 4-aspartylphosphate modification. One can recognise an HTH luxR-type domain in the interval 149 to 214; it reads SSDPFKILSK…ELVEYALKKK (66 aa). Residues 173–192 constitute a DNA-binding region (H-T-H motif); it reads NKDIAEKLFVSVKTVEAHKT.

In terms of processing, phosphorylated by NreB.

Its subcellular location is the cytoplasm. In terms of biological role, member of the two-component regulatory system NreB/NreC involved in the control of dissimilatory nitrate/nitrite reduction in response to oxygen. Phosphorylated NreC binds to a GC-rich palindromic sequence at the promoters of the nitrate (narGHJI) and nitrite (nir) reductase operons, as well as the putative nitrate transporter gene narT, and activates their expression. The protein is Oxygen regulatory protein NreC (nreC) of Staphylococcus epidermidis (strain ATCC 12228 / FDA PCI 1200).